The following is a 124-amino-acid chain: Large ribosomal subunit protein bL12c (124 aa).

Belongs to the bacterial ribosomal protein bL12 family. In terms of assembly, homodimer. Part of the ribosomal stalk of the 50S ribosomal subunit. Forms a multimeric L10(L12)X complex, where L10 forms an elongated spine to which 2 to 4 L12 dimers bind in a sequential fashion. Binds GTP-bound translation factors.

The protein localises to the plastid. Its subcellular location is the chloroplast. In terms of biological role, forms part of the ribosomal stalk which helps the ribosome interact with GTP-bound translation factors. Is thus essential for accurate translation. In Cyanidioschyzon merolae (strain NIES-3377 / 10D) (Unicellular red alga), this protein is Large ribosomal subunit protein bL12c.